A 228-amino-acid chain; its full sequence is uncharacterized protein (228 aa).

This is an uncharacterized protein from Ictalurid herpesvirus 1 (strain Auburn) (IcHV-1).